Reading from the N-terminus, the 840-residue chain is Aconitase AMT8 (840 aa).

258-260 (DSH) is a binding site for substrate. [4Fe-4S] cluster-binding residues include Cys450, Cys513, and Cys516. Substrate contacts are provided by residues Arg536, Arg541, and 709-710 (SR).

The protein belongs to the aconitase/IPM isomerase family.

The protein operates within mycotoxin biosynthesis. Aconitase; part of the gene clusters that mediate the biosynthesis of AM-toxins, host-selective toxins (HSTs) causing Alternaria blotch on apple, a worldwide distributed disease. AM-toxins are cyclic depsipeptides containing the 3 residues 2-hydroxy-isovaleric acid (2-HIV), dehydroalanine, L-alanine which are common for all 3 AM-toxins I to III. The fourth precursor is L-alpha-amino-methoxyphenyl-valeric acid (L-Amv) for AM-toxin I, L-alpha-amino-phenyl-valeric acid (L-Apv) for AM-toxin II, and L-alpha-amino-hydroxyphenyl-valeric acid (L-Ahv) for AM-toxin III. AM-toxins have two target sites for affecting susceptible apple cells; they cause invagination of the plasma membrane and electrolyte loss and chloroplast disorganization. The non-ribosomal peptide synthetase AMT1 contains 4 catalytic modules and is responsible for activation of each residue in AM-toxin. The aldo-keto reductase AMT2 catalyzes the conversion of 2-keto-isovaleric acid (2-KIV) to 2-hydroxy-isovaleric acid (2-HIV), one of the precursor residues incorporated by AMT1 during AM-toxin biosynthesis, by reduction of its ketone to an alcohol. The cytochrome P450 monooxygenase AMT3 and the thioesterase AMT4 are also important for AM-toxin production, but their exact function within the AM-toxin biosynthesis are not known yet. Up to 21 proteins (including AMT1 to AMT4) are predicted to be involved in AM-toxin biosynthesis since their expression ishighly up-regulated in AM-toxin-producing cultures. The sequence is that of Aconitase AMT8 from Alternaria alternata (Alternaria rot fungus).